A 176-amino-acid polypeptide reads, in one-letter code: Disulfide bond formation protein B (176 aa).

The Cytoplasmic portion of the chain corresponds to 1 to 11 (MLQLTTYRNLQ). Residues 12–28 (VFLVIMTAIGMSFALFF) traverse the membrane as a helical segment. Residues 29–46 (LQRYMGFSPCPLCIFQRI) lie on the Periplasmic side of the membrane. C38 and C41 are joined by a disulfide. A helical membrane pass occupies residues 47 to 63 (GLMIMGGFALIAALFHP). The Cytoplasmic segment spans residues 64–70 (KSMVIRL). Residues 71-88 (LLWLGSLAGIGWAAIVAG) traverse the membrane as a helical segment. Residues 89-145 (RHVWLQHLPADQVPSCGPGLDYWLDTLPMQQVLKEVFAGSGECASIDWTFLGLSIPE) lie on the Periplasmic side of the membrane. C104 and C131 form a disulfide bridge. A helical transmembrane segment spans residues 146 to 164 (QSLILFSILILTHLLILWR). The Cytoplasmic segment spans residues 165 to 176 (IVRPATPKPLAR).

Belongs to the DsbB family.

Its subcellular location is the cell inner membrane. Functionally, required for disulfide bond formation in some periplasmic proteins. Acts by oxidizing the DsbA protein. The sequence is that of Disulfide bond formation protein B from Psychrobacter cryohalolentis (strain ATCC BAA-1226 / DSM 17306 / VKM B-2378 / K5).